Consider the following 245-residue polypeptide: Probable phosphatase YcdX (245 aa).

Positions 7, 9, 15, 40, 73, 101, 131, 192, and 194 each coordinate Zn(2+).

Belongs to the PHP family. Homotrimer. It depends on Zn(2+) as a cofactor.

In Escherichia coli O81 (strain ED1a), this protein is Probable phosphatase YcdX.